Here is a 359-residue protein sequence, read N- to C-terminus: Guanine nucleotide-binding protein alpha-4 subunit (359 aa).

Gly2 carries N-myristoyl glycine lipidation. Cys3 carries S-palmitoyl cysteine lipidation. A G-alpha domain is found at 31-359 (TEVKLLLLGA…RYNLKDCGLF (329 aa)). Residues 34 to 47 (KLLLLGAGESGKST) are G1 motif. GTP is bound by residues 39–46 (GAGESGKS), 178–184 (LRARVKS), 203–207 (DVGGQ), 272–275 (NKMD), and Ala331. Residue Ser46 coordinates Mg(2+). A G2 motif region spans residues 176 to 184 (DILRARVKS). The interval 199–208 (FRMFDVGGQR) is G3 motif. The interval 268 to 275 (ILFLNKMD) is G4 motif. Positions 329–334 (TCATDT) are G5 motif.

Belongs to the G-alpha family. G(i/o/t/z) subfamily. As to quaternary structure, g proteins are composed of 3 units; alpha, beta and gamma. The alpha chain contains the guanine nucleotide binding site.

Its function is as follows. Guanine nucleotide-binding proteins (G proteins) are involved as modulators or transducers in various transmembrane signaling systems. This is Guanine nucleotide-binding protein alpha-4 subunit (gpa-4) from Caenorhabditis briggsae.